Here is a 257-residue protein sequence, read N- to C-terminus: Hydroxyacylglutathione hydrolase (257 aa).

Zn(2+)-binding residues include H54, H56, D58, H59, H110, D131, and H169.

It belongs to the metallo-beta-lactamase superfamily. Glyoxalase II family. In terms of assembly, monomer. The cofactor is Zn(2+).

The catalysed reaction is an S-(2-hydroxyacyl)glutathione + H2O = a 2-hydroxy carboxylate + glutathione + H(+). It functions in the pathway secondary metabolite metabolism; methylglyoxal degradation; (R)-lactate from methylglyoxal: step 2/2. Its function is as follows. Thiolesterase that catalyzes the hydrolysis of S-D-lactoyl-glutathione to form glutathione and D-lactic acid. This Hahella chejuensis (strain KCTC 2396) protein is Hydroxyacylglutathione hydrolase.